The primary structure comprises 283 residues: Putative transposase InsK for insertion sequence element IS150 (283 aa).

The 163-residue stretch at lysine 117–tyrosine 279 folds into the Integrase catalytic domain.

The protein belongs to the transposase IS3/IS150/IS904 family.

In terms of biological role, involved in the transposition of the insertion sequence IS150. In Escherichia coli (strain K12), this protein is Putative transposase InsK for insertion sequence element IS150 (insK).